A 513-amino-acid polypeptide reads, in one-letter code: Trigger factor (513 aa).

The PPIase FKBP-type domain maps to 164-249 (GDQIIIDFLG…VKAVKNAGEF (86 aa)). The segment at 436–513 (QAAIEAEEGA…KAPAKKKAEG (78 aa)) is disordered. Residues 452–461 (AKKAPAKKKA) show a composition bias toward basic residues. The segment covering 489–498 (ADEAPAAEEA) has biased composition (low complexity). The span at 501 to 513 (AKKKAPAKKKAEG) shows a compositional bias: basic residues.

It belongs to the FKBP-type PPIase family. Tig subfamily.

It is found in the cytoplasm. It catalyses the reaction [protein]-peptidylproline (omega=180) = [protein]-peptidylproline (omega=0). In terms of biological role, involved in protein export. Acts as a chaperone by maintaining the newly synthesized protein in an open conformation. Functions as a peptidyl-prolyl cis-trans isomerase. In Novosphingobium aromaticivorans (strain ATCC 700278 / DSM 12444 / CCUG 56034 / CIP 105152 / NBRC 16084 / F199), this protein is Trigger factor.